We begin with the raw amino-acid sequence, 535 residues long: Phosphoenolpyruvate carboxykinase (ATP) (535 aa).

Residues R59, Y201, and K207 each coordinate substrate. ATP contacts are provided by residues K207, H226, and 243-251 (GLSGTGKTT). The Mn(2+) site is built by K207 and H226. D264 lines the Mn(2+) pocket. ATP-binding positions include E292, R328, 444–445 (RI), and T450. R328 contributes to the substrate binding site.

This sequence belongs to the phosphoenolpyruvate carboxykinase (ATP) family. It depends on Mn(2+) as a cofactor.

It localises to the cytoplasm. The catalysed reaction is oxaloacetate + ATP = phosphoenolpyruvate + ADP + CO2. It functions in the pathway carbohydrate biosynthesis; gluconeogenesis. In terms of biological role, involved in the gluconeogenesis. Catalyzes the conversion of oxaloacetate (OAA) to phosphoenolpyruvate (PEP) through direct phosphoryl transfer between the nucleoside triphosphate and OAA. The sequence is that of Phosphoenolpyruvate carboxykinase (ATP) from Porphyromonas gingivalis (strain ATCC BAA-308 / W83).